A 187-amino-acid chain; its full sequence is High-affinity copper transporter ctrA2 (187 aa).

Transmembrane regions (helical) follow at residues 44 to 64 and 137 to 157; these read YAGT…LVAF and AAIF…VMTM.

It belongs to the copper transporter (Ctr) (TC 1.A.56) family. SLC31A subfamily.

It localises to the cell membrane. It catalyses the reaction Cu(2+)(in) = Cu(2+)(out). Functionally, high-affinity copper transporter of plasma membrane that mediates copper uptake under low copper conditions. The mechanism driving the transmembrane transport of copper has still to be determined. Acts as a potential virulence factor. This Aspergillus fumigatus (strain ATCC MYA-4609 / CBS 101355 / FGSC A1100 / Af293) (Neosartorya fumigata) protein is High-affinity copper transporter ctrA2.